Consider the following 695-residue polypeptide: FMR1-interacting protein NUFIP2 (695 aa).

The interval 1–100 is disordered; sequence MEEKPGQPQP…KTGYGELNGN (100 aa). Composition is skewed to basic residues over residues 11–23 and 30–53; these read QHHH…HHHP and PHHH…HHQQ. A Glycyl lysine isopeptide (Lys-Gly) (interchain with G-Cter in SUMO2) cross-link involves residue lysine 78. Threonine 87 bears the Phosphothreonine mark. Lysine 109 participates in a covalent cross-link: Glycyl lysine isopeptide (Lys-Gly) (interchain with G-Cter in SUMO2). Residues serine 112 and serine 113 each carry the phosphoserine modification. Residues lysine 136, lysine 146, lysine 157, and lysine 171 each participate in a glycyl lysine isopeptide (Lys-Gly) (interchain with G-Cter in SUMO2) cross-link. Disordered stretches follow at residues 155–189, 204–234, 261–341, and 369–402; these read IQKN…IPNG, GKGA…AKGC, FKPD…KPPP, and TIQN…SQVP. The span at 159-182 shows a compositional bias: basic and acidic residues; the sequence is SMDKKNGKSYENKSGENQSVDKSD. Phosphoserine occurs at positions 212 and 214. Tyrosine 218 carries the phosphotyrosine modification. Threonine 219 and threonine 220 each carry phosphothreonine. The segment covering 221–230 has biased composition (basic residues); the sequence is PKKRKARRNS. Over residues 261 to 275 the composition is skewed to basic and acidic residues; the sequence is FKPDYSEQKGNRVDG. Residues lysine 262 and lysine 281 each participate in a glycyl lysine isopeptide (Lys-Gly) (interchain with G-Cter in SUMO2) cross-link. An Omega-N-methylarginine modification is found at arginine 291. Residue lysine 293 forms a Glycyl lysine isopeptide (Lys-Gly) (interchain with G-Cter in SUMO2) linkage. Serine 304 is modified (phosphoserine). A Glycyl lysine isopeptide (Lys-Gly) (interchain with G-Cter in SUMO2) cross-link involves residue lysine 307. A compositionally biased stretch (low complexity) spans 373-396; sequence SSVSPTSSSSSSSSTGETQTQSSS. Serine 376 is modified (phosphoserine). Threonine 571 carries the phosphothreonine modification. A phosphoserine mark is found at serine 572, serine 592, serine 608, and serine 629. Phosphothreonine is present on threonine 633. Phosphoserine occurs at positions 637, 652, 655, and 692.

As to quaternary structure, interacts with FMR1 (via N-terminus). Interacts with DDX6.

The protein localises to the nucleus. It is found in the cytoplasm. It localises to the stress granule. In terms of biological role, binds RNA. The protein is FMR1-interacting protein NUFIP2 of Homo sapiens (Human).